The following is a 308-amino-acid chain: Protein doublecortin (308 aa).

The 84-residue stretch at 21–104 folds into the Doublecortin 1 domain; that stretch reads ARVILFRNGD…AEPLNTEVIP (84 aa). Residues 115–167 form a disordered region; that stretch reads EVSDQDDEPKPSKPFVSSVPPPPTPTPTSSSGTTTTSQPTLSASPSVSSAQSP. Residues 141-167 show a composition bias toward low complexity; sequence PTSSSGTTTTSQPTLSASPSVSSAQSP. Positions 194–277 constitute a Doublecortin 2 domain; it reads KVIMCFRNGD…GETLNPLDFS (84 aa). Positions 282–308 are disordered; the sequence is EHVKQKKLQEQQQQASEQQKPQEQEIF. Over residues 291 to 300 the composition is skewed to low complexity; it reads EQQQQASEQQ.

Interacts with lis1.

It is found in the cytoplasm. The protein resides in the cytoskeleton. Has a cytoskeleton-independent function in chemotactic signaling during development. This Dictyostelium discoideum (Social amoeba) protein is Protein doublecortin (dcx).